The following is a 127-amino-acid chain: MSAEFMVICKKILFRNCVIVSLFVFTYNTWAQCNNNIKIMRKYESEGKYTVRNLVKNKAIALELAEIYVKNRYGQDAAEEEKPYEITELTTSWVVEGTIHSDQIAGGVFIIEIGKNDGRILNFGHGK.

This is an uncharacterized protein from Escherichia coli (strain K12).